We begin with the raw amino-acid sequence, 162 residues long: Peroxiredoxin-2 (162 aa).

In terms of domain architecture, Thioredoxin spans 4–162; that stretch reads IAVGDVLPDG…SSADDILKDL (159 aa). Cys51 acts as the Cysteine sulfenic acid (-SOH) intermediate in catalysis.

The protein belongs to the peroxiredoxin family. Prx5 subfamily. In terms of assembly, monomer. Homodimer. Glutathionylation of C(P) causes the dimer to dissociate. Subsequent reduction of the mixed disulfide bond leads again to dimerization.

It carries out the reaction [glutaredoxin]-dithiol + a hydroperoxide = [glutaredoxin]-disulfide + an alcohol + H2O. Functionally, thiol-specific peroxidase that catalyzes the reduction of hydrogen peroxide and organic hydroperoxides to water and alcohols, respectively. Can reduce H(2)O(2) and short chain organic, fatty acid, and phospholipid hydroperoxides. Plays a role in cell protection against oxidative stress by detoxifying peroxides. In Populus trichocarpa (Western balsam poplar), this protein is Peroxiredoxin-2.